An 85-amino-acid polypeptide reads, in one-letter code: Translation initiation factor IF-1 (85 aa).

The region spanning 1–72 is the S1-like domain; that stretch reads MAKEELLEMR…TKARITYRFM (72 aa).

It belongs to the IF-1 family. Component of the 30S ribosomal translation pre-initiation complex which assembles on the 30S ribosome in the order IF-2 and IF-3, IF-1 and N-formylmethionyl-tRNA(fMet); mRNA recruitment can occur at any time during PIC assembly.

It localises to the cytoplasm. Its function is as follows. One of the essential components for the initiation of protein synthesis. Stabilizes the binding of IF-2 and IF-3 on the 30S subunit to which N-formylmethionyl-tRNA(fMet) subsequently binds. Helps modulate mRNA selection, yielding the 30S pre-initiation complex (PIC). Upon addition of the 50S ribosomal subunit IF-1, IF-2 and IF-3 are released leaving the mature 70S translation initiation complex. The polypeptide is Translation initiation factor IF-1 (Erythrobacter litoralis (strain HTCC2594)).